We begin with the raw amino-acid sequence, 216 residues long: Phosphoenolpyruvate guanylyltransferase (216 aa).

Phosphoenolpyruvate contacts are provided by threonine 150, glycine 165, and serine 168.

It belongs to the CofC family.

The enzyme catalyses phosphoenolpyruvate + GTP + H(+) = enolpyruvoyl-2-diphospho-5'-guanosine + diphosphate. The protein operates within cofactor biosynthesis; coenzyme F420 biosynthesis. Functionally, guanylyltransferase that catalyzes the activation of phosphoenolpyruvate (PEP) as enolpyruvoyl-2-diphospho-5'-guanosine, via the condensation of PEP with GTP. It is involved in the biosynthesis of coenzyme F420, a hydride carrier cofactor. The chain is Phosphoenolpyruvate guanylyltransferase from Mycobacterium leprae (strain Br4923).